A 464-amino-acid polypeptide reads, in one-letter code: GTPase Der (464 aa).

2 consecutive EngA-type G domains span residues 3 to 166 and 178 to 351; these read PVIA…PEVE and IRIA…DSAF. Residues 9 to 16, 56 to 60, 118 to 121, 184 to 191, 231 to 235, and 296 to 299 contribute to the GTP site; these read GRPNVGKS, DTGGL, NKTD, GRPNAGKS, DTAGV, and NKWD. The KH-like domain occupies 352–436; the sequence is IKVSTNHLTK…PIRLEFKTGE (85 aa).

This sequence belongs to the TRAFAC class TrmE-Era-EngA-EngB-Septin-like GTPase superfamily. EngA (Der) GTPase family. Associates with the 50S ribosomal subunit.

Functionally, GTPase that plays an essential role in the late steps of ribosome biogenesis. This is GTPase Der from Thioalkalivibrio sulfidiphilus (strain HL-EbGR7).